A 177-amino-acid chain; its full sequence is ATP synthase subunit delta (177 aa).

It belongs to the ATPase delta chain family. In terms of assembly, F-type ATPases have 2 components, F(1) - the catalytic core - and F(0) - the membrane proton channel. F(1) has five subunits: alpha(3), beta(3), gamma(1), delta(1), epsilon(1). F(0) has three main subunits: a(1), b(2) and c(10-14). The alpha and beta chains form an alternating ring which encloses part of the gamma chain. F(1) is attached to F(0) by a central stalk formed by the gamma and epsilon chains, while a peripheral stalk is formed by the delta and b chains.

Its subcellular location is the cell inner membrane. Functionally, f(1)F(0) ATP synthase produces ATP from ADP in the presence of a proton or sodium gradient. F-type ATPases consist of two structural domains, F(1) containing the extramembraneous catalytic core and F(0) containing the membrane proton channel, linked together by a central stalk and a peripheral stalk. During catalysis, ATP synthesis in the catalytic domain of F(1) is coupled via a rotary mechanism of the central stalk subunits to proton translocation. In terms of biological role, this protein is part of the stalk that links CF(0) to CF(1). It either transmits conformational changes from CF(0) to CF(1) or is implicated in proton conduction. This chain is ATP synthase subunit delta, found in Vibrio alginolyticus.